The sequence spans 397 residues: Probable sugar efflux transporter (397 aa).

Transmembrane regions (helical) follow at residues V15–L35, G51–L71, L81–F101, V103–A123, A136–V156, F170–L190, P209–Y229, F246–G266, A273–P293, L301–V321, V333–G353, and D364–F384.

The protein belongs to the major facilitator superfamily. SotB (TC 2.A.1.2) family.

It is found in the cell inner membrane. In terms of biological role, involved in the efflux of sugars. The physiological role may be the reduction of the intracellular concentration of toxic sugars or sugar metabolites. The polypeptide is Probable sugar efflux transporter (Escherichia fergusonii (strain ATCC 35469 / DSM 13698 / CCUG 18766 / IAM 14443 / JCM 21226 / LMG 7866 / NBRC 102419 / NCTC 12128 / CDC 0568-73)).